A 376-amino-acid polypeptide reads, in one-letter code: MRRGLLQQVRRVVIKVGSRVLTVEGGGLDYDAISRLCDEMAGLRQQGIEVILVSSGAVAAGRDALRSADTTLTIPQKQAAAAVGQPLLMQAYQQACTRHGLVTAQILLTAEDLANRNRFLNARTTLEALLTAGALPVINENDSVAVAEIKFGDNDNLSALVTSLAEADLLLILTDIEGLYSANPASDPDAELIPLVRSITREIERMAGGSGSNVGTGGMATKVTAAKKAARFGVPTILAPGKQPGVITAAVSGQEIGTLFLPATDGLNRRKHWIAYTLRPAGKVLVDAGAQKALVEKGTSLLPSGITGVEGRFERGRCVRICGPDGTEIARGLADYSSSEIQLIAGHKSAEIEQLLGYRYGDDVVHRDNLVLMTHS.

Lys-15 serves as a coordination point for ATP. Positions 55, 142, and 154 each coordinate substrate. ATP is bound by residues 174 to 175 and 216 to 222; these read TD and TGGMATK. Positions 281–359 constitute a PUA domain; the sequence is AGKVLVDAGA…AEIEQLLGYR (79 aa).

Belongs to the glutamate 5-kinase family.

The protein localises to the cytoplasm. It catalyses the reaction L-glutamate + ATP = L-glutamyl 5-phosphate + ADP. It functions in the pathway amino-acid biosynthesis; L-proline biosynthesis; L-glutamate 5-semialdehyde from L-glutamate: step 1/2. Functionally, catalyzes the transfer of a phosphate group to glutamate to form L-glutamate 5-phosphate. The sequence is that of Glutamate 5-kinase from Trichlorobacter lovleyi (strain ATCC BAA-1151 / DSM 17278 / SZ) (Geobacter lovleyi).